Here is a 540-residue protein sequence, read N- to C-terminus: Glucose-6-phosphate isomerase (540 aa).

Catalysis depends on glutamate 350, which acts as the Proton donor. Catalysis depends on residues histidine 381 and lysine 503.

Belongs to the GPI family.

The protein resides in the cytoplasm. The enzyme catalyses alpha-D-glucose 6-phosphate = beta-D-fructose 6-phosphate. It functions in the pathway carbohydrate biosynthesis; gluconeogenesis. The protein operates within carbohydrate degradation; glycolysis; D-glyceraldehyde 3-phosphate and glycerone phosphate from D-glucose: step 2/4. In terms of biological role, catalyzes the reversible isomerization of glucose-6-phosphate to fructose-6-phosphate. This Burkholderia orbicola (strain AU 1054) protein is Glucose-6-phosphate isomerase.